We begin with the raw amino-acid sequence, 186 residues long: Orotate phosphoribosyltransferase (186 aa).

Residues Arg-96, Lys-100, His-102, and 121–129 (DDVATTGTS) contribute to the 5-phospho-alpha-D-ribose 1-diphosphate site. Thr-125 and Arg-153 together coordinate orotate.

It belongs to the purine/pyrimidine phosphoribosyltransferase family. PyrE subfamily. As to quaternary structure, homodimer. The cofactor is Mg(2+).

The enzyme catalyses orotidine 5'-phosphate + diphosphate = orotate + 5-phospho-alpha-D-ribose 1-diphosphate. The protein operates within pyrimidine metabolism; UMP biosynthesis via de novo pathway; UMP from orotate: step 1/2. Catalyzes the transfer of a ribosyl phosphate group from 5-phosphoribose 1-diphosphate to orotate, leading to the formation of orotidine monophosphate (OMP). The polypeptide is Orotate phosphoribosyltransferase (Aeropyrum pernix (strain ATCC 700893 / DSM 11879 / JCM 9820 / NBRC 100138 / K1)).